A 279-amino-acid polypeptide reads, in one-letter code: Movement protein (279 aa).

Residues serine 246–leucine 279 form a disordered region. Positions glutamate 254 to serine 268 are enriched in low complexity.

It belongs to the cucumovirus movement protein family.

Its subcellular location is the host cell junction. It localises to the host plasmodesma. Its function is as follows. Transports viral genome to neighboring plant cells directly through plasmosdesmata, without any budding. The movement protein allows efficient cell to cell propagation, by bypassing the host cell wall barrier. Acts by forming a tubular structure at the host plasmodesmata, enlarging it enough to allow free passage of virion capsids. This chain is Movement protein, found in Cucumber mosaic virus (strain N) (CMV).